The sequence spans 81 residues: Large ribosomal subunit protein bL31 (81 aa).

Residues cysteine 16, cysteine 18, cysteine 38, and cysteine 41 each contribute to the Zn(2+) site.

Belongs to the bacterial ribosomal protein bL31 family. Type A subfamily. As to quaternary structure, part of the 50S ribosomal subunit. It depends on Zn(2+) as a cofactor.

Binds the 23S rRNA. This chain is Large ribosomal subunit protein bL31, found in Mycobacterium marinum (strain ATCC BAA-535 / M).